Consider the following 478-residue polypeptide: Serine/threonine-protein phosphatase 2A activator 1 (478 aa).

Positions 359-478 are disordered; sequence DPSAIPPPSR…DITTKAPWAK (120 aa). Over residues 396–419 the composition is skewed to low complexity; sequence APWATASQSTPPPSTGTAAPWATS.

The protein belongs to the PTPA-type PPIase family.

It localises to the cytoplasm. The protein localises to the nucleus. It catalyses the reaction [protein]-peptidylproline (omega=180) = [protein]-peptidylproline (omega=0). Its function is as follows. PPIases accelerate the folding of proteins. It catalyzes the cis-trans isomerization of proline imidic peptide bonds in oligopeptides. Acts as a regulatory subunit for PP2A-like phosphatases modulating their activity or substrate specificity, probably by inducing a conformational change in the catalytic subunit, a direct target of the PPIase. Can reactivate inactive phosphatase PP2A-phosphatase methylesterase complexes (PP2Ai) in presence of ATP and Mg(2+) by dissociating the inactive form from the complex. In Aspergillus oryzae (strain ATCC 42149 / RIB 40) (Yellow koji mold), this protein is Serine/threonine-protein phosphatase 2A activator 1 (rrd1).